Reading from the N-terminus, the 167-residue chain is 18.8 kDa class II heat shock protein (167 aa).

A sHSP domain is found at 49–167 (DAKAMAATPA…KPKTVEVKVA (119 aa)).

The protein belongs to the small heat shock protein (HSP20) family.

It is found in the cytoplasm. The polypeptide is 18.8 kDa class II heat shock protein (SHSP-2) (Ipomoea nil (Japanese morning glory)).